A 595-amino-acid chain; its full sequence is MATKARVMYDFAAEPGNNELTVTEGEIITVTNPNVGGGWLEGKNNKGEQGLVPTDYVEILPNDGKDPFSCGNSVADQAFLDSLTASTAQTNSSSANSNNQVGGGNDPWTAWNAPKPGNWDSSDAWGSRTDGTSAQRNSSANNWDTGFGHPQAYQGPATGDDDEWDEDWDDPKSSSPYFKDSEPAEAGGIQRGNSRAGASSMKLPLNKFPGFAKPGMEQYLLAKQLAKPKEKIAIIVGDYGPMWVYPTSTFDCVVADPRKGSKMYGLKSYIEYQLTPTNTNRSVNHRYKHFDWLYERLLVKFGSAIPIPSLPDKQVTGRFEEEFIKMRMERLQAWMTRMCRHPVVSESEVFQQFLNFRDEKEWKTGKRKAEKDELVGVMIFSTMEPEAPDLDLIEIEQKCDAVGKFTKAMDDGVKELLTVGQEHWKRCTGPLPKEYQKIGKALQSLAAVFSSSGYQGETDLNDAITEAGKTYEEIASLVAEQPKKDLHFLMECNHEYKGFLGCFPDIIGAHKGAIEKVKESDKLVATSKITPQDKQTMVKRVGTMSYALQAEMNHFHSNRIYDYNSVIRLYLEQQVQFYETIAEKLRQALSRFPVM.

The 62-residue stretch at 1–62 folds into the SH3 domain; it reads MATKARVMYD…PTDYVEILPN (62 aa). Positions 89-100 are enriched in low complexity; sequence QTNSSSANSNNQ. The segment at 89 to 199 is disordered; that stretch reads QTNSSSANSN…QRGNSRAGAS (111 aa). Ser121 bears the Phosphoserine mark. Residues 129–144 are compositionally biased toward polar residues; the sequence is TDGTSAQRNSSANNWD. Positions 159 to 169 are enriched in acidic residues; the sequence is GDDDEWDEDWD. Ser200 carries the post-translational modification Phosphoserine. The critical for tubulation activity stretch occupies residues 201–213; that stretch reads MKLPLNKFPGFAK. Residue Tyr239 is modified to Phosphotyrosine. The PX domain occupies 250–360; sequence FDCVVADPRK…QQFLNFRDEK (111 aa). Residues Arg286, Lys288, and Arg327 each contribute to the a 1,2-diacyl-sn-glycero-3-phospho-(1D-myo-inositol-4,5-bisphosphate) site. Lys288 carries the N6-acetyllysine modification. One can recognise a BAR domain in the interval 392–595; that stretch reads LIEIEQKCDA…RQALSRFPVM (204 aa).

It belongs to the sorting nexin family. Homodimer, and homooligomer. Heterodimer with SNX18. Interacts with ITCH. Interacts (via SH3 domain) with TNK2, WASL and ACTR3. Identified in a complex with TNK2 and clathrin heavy chains. Identified in a complex with the AP-2 complex, clathrin and DNM2. Interacts (via SH3 domain) with DNM1 and DNM2. Identified in an oligomeric complex containing DNM1 and SNX9. Interacts with FCHSD1. Interacts with ADAM9 and ADAM15 cytoplasmic tails. In terms of processing, phosphorylated on tyrosine residues by TNK2. Phosphorylation promotes its activity in the degradation of EGFR. Ubiquitinated by ITCH. Detected in inner ear vestibula and in the cuticular plate of cochlear hair cells (at protein level).

The protein resides in the cytoplasmic vesicle membrane. The protein localises to the cell membrane. Its subcellular location is the cytoplasmic vesicle. It is found in the clathrin-coated vesicle. It localises to the golgi apparatus. The protein resides in the trans-Golgi network. The protein localises to the cell projection. Its subcellular location is the ruffle. It is found in the cytoplasm. Its function is as follows. Involved in endocytosis and intracellular vesicle trafficking, both during interphase and at the end of mitosis. Required for efficient progress through mitosis and cytokinesis. Required for normal formation of the cleavage furrow at the end of mitosis. Plays a role in endocytosis via clathrin-coated pits, but also clathrin-independent, actin-dependent fluid-phase endocytosis. Plays a role in macropinocytosis. Promotes internalization of TNFR. Promotes degradation of EGFR after EGF signaling. Stimulates the GTPase activity of DNM1. Promotes DNM1 oligomerization. Promotes activation of the Arp2/3 complex by WASL, and thereby plays a role in the reorganization of the F-actin cytoskeleton. Binds to membranes enriched in phosphatidylinositol 4,5-bisphosphate and promotes membrane tubulation. Has lower affinity for membranes enriched in phosphatidylinositol 3-phosphate. The protein is Sorting nexin-9 (Snx9) of Mus musculus (Mouse).